A 196-amino-acid polypeptide reads, in one-letter code: ECF RNA polymerase sigma factor SigM (196 aa).

Residues 39 to 105 (LFRRHHRQLH…ACLDRLRRAK (67 aa)) form a sigma-70 factor domain-2 region. An Interaction with polymerase core subunit RpoC motif is present at residues 63–66 (DALQ). The tract at residues 130-181 (AVQRALMRLPVEQRAAVVAVDMQGYSIADTARMLGVAEGTVKSRCARARARL) is sigma-70 factor domain-4. A DNA-binding region (H-T-H motif) is located at residues 156 to 175 (IADTARMLGVAEGTVKSRCA).

This sequence belongs to the sigma-70 factor family. ECF subfamily. As to quaternary structure, interacts transiently with the RNA polymerase catalytic core formed by RpoA, RpoB, RpoC and RpoZ (2 alpha, 1 beta, 1 beta' and 1 omega subunit) to form the RNA polymerase holoenzyme that can initiate transcription. Interacts (via sigma-70 factor domain 4) with anti-sigma-M factor RsmA.

Sigma factors are initiation factors that promote the attachment of RNA polymerase to specific initiation sites and are then released. Extracytoplasmic function (ECF) sigma factors are held in an inactive form by an anti-sigma factor until released by regulated intramembrane proteolysis. This is ECF RNA polymerase sigma factor SigM (sigM) from Mycobacterium tuberculosis (strain ATCC 35801 / TMC 107 / Erdman).